We begin with the raw amino-acid sequence, 391 residues long: Succinate--CoA ligase [ADP-forming] subunit beta (391 aa).

The ATP-grasp domain maps to 9 to 248; it reads KDILRKFGVS…TGEEDPFEVE (240 aa). ATP is bound by residues Lys-50, 57–59, Glu-103, Met-106, and Glu-111; that span reads GRG. 2 residues coordinate Mg(2+): Asn-203 and Asp-217. Substrate is bound by residues Asn-268 and 325-327; that span reads GIV.

This sequence belongs to the succinate/malate CoA ligase beta subunit family. As to quaternary structure, heterotetramer of two alpha and two beta subunits. The cofactor is Mg(2+).

It catalyses the reaction succinate + ATP + CoA = succinyl-CoA + ADP + phosphate. The enzyme catalyses GTP + succinate + CoA = succinyl-CoA + GDP + phosphate. It participates in carbohydrate metabolism; tricarboxylic acid cycle; succinate from succinyl-CoA (ligase route): step 1/1. Succinyl-CoA synthetase functions in the citric acid cycle (TCA), coupling the hydrolysis of succinyl-CoA to the synthesis of either ATP or GTP and thus represents the only step of substrate-level phosphorylation in the TCA. The beta subunit provides nucleotide specificity of the enzyme and binds the substrate succinate, while the binding sites for coenzyme A and phosphate are found in the alpha subunit. In Chlorobium phaeobacteroides (strain BS1), this protein is Succinate--CoA ligase [ADP-forming] subunit beta.